Reading from the N-terminus, the 272-residue chain is Glutamate racemase (272 aa).

Residues 9-10 (DS) and 41-42 (YG) each bind substrate. The active-site Proton donor/acceptor is cysteine 73. 74 to 75 (NT) contributes to the substrate binding site. Cysteine 183 serves as the catalytic Proton donor/acceptor. 184–185 (TH) contributes to the substrate binding site.

Belongs to the aspartate/glutamate racemases family.

It catalyses the reaction L-glutamate = D-glutamate. Its pathway is cell wall biogenesis; peptidoglycan biosynthesis. Provides the (R)-glutamate required for cell wall biosynthesis. The chain is Glutamate racemase from Shewanella sp. (strain MR-4).